A 162-amino-acid polypeptide reads, in one-letter code: Caveolin-2 (162 aa).

Over 1–86 (MGLETEKADV…FEISKYVMYK (86 aa)) the chain is Cytoplasmic. Tyr19 is subject to Phosphotyrosine; by SRC. Phosphoserine is present on residues Ser20 and Ser23. Tyr27 bears the Phosphotyrosine; by SRC mark. The residue at position 36 (Ser36) is a Phosphoserine. The segment at residues 87–107 (FLTVFLAIPLAFLAGILFATL) is an intramembrane region (helical). Residues 108–162 (SCLHIWIIMPFVKTCLMVLPSVQTIWKSVTDAIIAPLCTSIGRSFSSVSLQLSQD) are Cytoplasmic-facing.

The protein belongs to the caveolin family. Monomer or homodimer. Interacts with CAV1; the interaction forms a stable heterooligomeric complex that is required for targeting to lipid rafts and for caveolae formation. Tyrosine phosphorylated forms do not form heterooligomers with the Tyr-19-phosphorylated form existing as a monomer or dimer, and the Tyr-27-form as a monomer only. Interacts (tyrosine phosphorylated form) with the SH2 domain-containing proteins, RASA1, NCK1 and SRC. Interacts (tyrosine phosphorylated form) with INSR, the interaction (Tyr-27-phosphorylated form) is increased on insulin stimulation. Interacts (Tyr-19 phosphorylated form) with MAPK1 (phosphorylated form); the interaction, promoted by insulin, leads to nuclear location and MAPK1 activation. Interacts with STAT3; the interaction is increased on insulin-induced tyrosine phosphorylation leading to STAT activation. In terms of processing, phosphorylated on serine and tyrosine residues. CAV1 promotes phosphorylation on Ser-23 which then targets the complex to the plasma membrane, lipid rafts and caveolae. Phosphorylation on Ser-36 appears to modulate mitosis in endothelial cells. Phosphorylation on both Tyr-19 and Tyr-27 is required for insulin-induced 'Ser-727' phosphorylation of STAT3 and its activation. Phosphorylation on Tyr-19 is required for insulin-induced phosphorylation of MAPK1 and DNA binding of STAT3. Tyrosine phosphorylation is induced by both EGF and insulin (By. similarity).

The protein localises to the nucleus. It is found in the cytoplasm. Its subcellular location is the golgi apparatus membrane. The protein resides in the cell membrane. It localises to the membrane. The protein localises to the caveola. May act as a scaffolding protein within caveolar membranes. Interacts directly with G-protein alpha subunits and can functionally regulate their activity. Acts as an accessory protein in conjunction with CAV1 in targeting to lipid rafts and driving caveolae formation. The Ser-36 phosphorylated form has a role in modulating mitosis in endothelial cells. Positive regulator of cellular mitogenesis of the MAPK signaling pathway. Required for the insulin-stimulated nuclear translocation and activation of MAPK1 and STAT3, and the subsequent regulation of cell cycle progression. In Plecturocebus moloch (Dusky titi monkey), this protein is Caveolin-2 (CAV2).